A 67-amino-acid polypeptide reads, in one-letter code: Beta-mammal toxin CeII9 (67 aa).

Residues 1 to 66 (KEGYLVNHST…VWPLPKKTCN (66 aa)) enclose the LCN-type CS-alpha/beta domain. 4 cysteine pairs are disulfide-bonded: Cys12–Cys65, Cys16–Cys41, Cys25–Cys46, and Cys29–Cys48.

It belongs to the long (4 C-C) scorpion toxin superfamily. Sodium channel inhibitor family. Beta subfamily. As to expression, expressed by the venom gland.

It is found in the secreted. Functionally, beta toxins bind at site-4 of sodium channels and shift the voltage of activation toward more negative potentials thereby affecting sodium channel activation and promoting spontaneous and repetitive firing. This toxin is active against mammals and lethal to mice. Selectively modulates Nav1.4/SCN4A, a sodium channel present in both denervated and innervated skeletal muscle. This is Beta-mammal toxin CeII9 from Centruroides elegans (Bark scorpion).